A 208-amino-acid chain; its full sequence is MTQKNGPLRVGIGGPVGSGKTTLTEKLCKAMRDKYSVAVITNDIYTQEDALILARRQALSEDRIIGVETGGCPHTAIREDASINLQAVVEMTRRFPDLDVVFIESGGDNLAATFSPDLADLTLYVISVCQGEEIPRKGGPGITRSDFLVINKSDLAPYVHVDLEVMEADAMRMRAKRPFGFTDLHRGKGVQEIIDFIVENGGLEPRSN.

14-21 (GPVGSGKT) provides a ligand contact to GTP.

This sequence belongs to the SIMIBI class G3E GTPase family. UreG subfamily. In terms of assembly, homodimer. UreD, UreF and UreG form a complex that acts as a GTP-hydrolysis-dependent molecular chaperone, activating the urease apoprotein by helping to assemble the nickel containing metallocenter of UreC. The UreE protein probably delivers the nickel.

The protein localises to the cytoplasm. Functionally, facilitates the functional incorporation of the urease nickel metallocenter. This process requires GTP hydrolysis, probably effectuated by UreG. Disruption of the ure1 gene cluster suggests that it protects brucellae during their passage through the stomach. The major route of infection in human brucellosis is oral. The polypeptide is Urease accessory protein UreG 1 (Brucella abortus (strain 2308)).